The sequence spans 162 residues: Small ribosomal subunit protein uS5 (162 aa).

The S5 DRBM domain occupies 11-74 (LTDRVVHISR…EQAKKNLIKV (64 aa)).

Belongs to the universal ribosomal protein uS5 family. As to quaternary structure, part of the 30S ribosomal subunit. Contacts proteins S4 and S8.

In terms of biological role, with S4 and S12 plays an important role in translational accuracy. Functionally, located at the back of the 30S subunit body where it stabilizes the conformation of the head with respect to the body. This is Small ribosomal subunit protein uS5 from Pelobacter propionicus (strain DSM 2379 / NBRC 103807 / OttBd1).